The primary structure comprises 61 residues: MPQLNPAPWFMILSSTWLIYTIILQPKILSHLPTNNPTNKNNKINTNSWTWPWTQHSSTNS.

A helical membrane pass occupies residues 10-32 (FMILSSTWLIYTIILQPKILSHL).

Belongs to the ATPase protein 8 family. As to quaternary structure, component of the ATP synthase complex composed at least of ATP5F1A/subunit alpha, ATP5F1B/subunit beta, ATP5MC1/subunit c (homooctomer), MT-ATP6/subunit a, MT-ATP8/subunit 8, ATP5ME/subunit e, ATP5MF/subunit f, ATP5MG/subunit g, ATP5MK/subunit k, ATP5MJ/subunit j, ATP5F1C/subunit gamma, ATP5F1D/subunit delta, ATP5F1E/subunit epsilon, ATP5PF/subunit F6, ATP5PB/subunit b, ATP5PD/subunit d, ATP5PO/subunit OSCP. ATP synthase complex consists of a soluble F(1) head domain (subunits alpha(3) and beta(3)) - the catalytic core - and a membrane F(0) domain - the membrane proton channel (subunits c, a, 8, e, f, g, k and j). These two domains are linked by a central stalk (subunits gamma, delta, and epsilon) rotating inside the F1 region and a stationary peripheral stalk (subunits F6, b, d, and OSCP).

The protein localises to the mitochondrion membrane. In terms of biological role, subunit 8, of the mitochondrial membrane ATP synthase complex (F(1)F(0) ATP synthase or Complex V) that produces ATP from ADP in the presence of a proton gradient across the membrane which is generated by electron transport complexes of the respiratory chain. ATP synthase complex consist of a soluble F(1) head domain - the catalytic core - and a membrane F(1) domain - the membrane proton channel. These two domains are linked by a central stalk rotating inside the F(1) region and a stationary peripheral stalk. During catalysis, ATP synthesis in the catalytic domain of F(1) is coupled via a rotary mechanism of the central stalk subunits to proton translocation. In vivo, can only synthesize ATP although its ATP hydrolase activity can be activated artificially in vitro. Part of the complex F(0) domain. This is ATP synthase F(0) complex subunit 8 from Chelonia mydas (Green sea-turtle).